Consider the following 1068-residue polypeptide: Putative protein TIC 214 N-terminal part (1068 aa).

Transmembrane regions (helical) follow at residues 11–31 (VLWV…LFGI), 68–88 (ITGQ…VLLI), 92–112 (LLTL…KDLI), 131–151 (IFFD…SPVL), 166–186 (FIFL…FVSL), and 213–233 (FSII…VPFI).

The protein belongs to the TIC214 family. In terms of assembly, part of the Tic complex.

It localises to the plastid. The protein localises to the chloroplast inner membrane. Involved in protein precursor import into chloroplasts. May be part of an intermediate translocation complex acting as a protein-conducting channel at the inner envelope. The sequence is that of Putative protein TIC 214 N-terminal part from Marchantia polymorpha (Common liverwort).